We begin with the raw amino-acid sequence, 333 residues long: tRNA uridine(34) hydroxylase (333 aa).

The region spanning serine 123–serine 217 is the Rhodanese domain. Cysteine 177 serves as the catalytic Cysteine persulfide intermediate. A compositionally biased stretch (basic and acidic residues) spans glutamine 313 to lysine 327. The interval glutamine 313–alanine 333 is disordered.

This sequence belongs to the TrhO family.

It catalyses the reaction uridine(34) in tRNA + AH2 + O2 = 5-hydroxyuridine(34) in tRNA + A + H2O. Functionally, catalyzes oxygen-dependent 5-hydroxyuridine (ho5U) modification at position 34 in tRNAs. The chain is tRNA uridine(34) hydroxylase from Shewanella oneidensis (strain ATCC 700550 / JCM 31522 / CIP 106686 / LMG 19005 / NCIMB 14063 / MR-1).